The sequence spans 188 residues: MRVIASSIRKGNVLEQDGKLYVVLSAENIHPGKGTPVSQIEMRRISDGVKISERYKTTDQVEKATIEERNYSFLYEDGEGFHFMEPESFDQVQVTKDVVGNSAPYLQEGMVVKLSMHDTVAVAITLPQRATLEVVETEPVTKGQTASSSYKPAVLSNGVRTAVPPHVGVGTRIVVLTEDGSYVERAKD.

Belongs to the elongation factor P family.

It is found in the cytoplasm. The protein operates within protein biosynthesis; polypeptide chain elongation. Involved in peptide bond synthesis. Stimulates efficient translation and peptide-bond synthesis on native or reconstituted 70S ribosomes in vitro. Probably functions indirectly by altering the affinity of the ribosome for aminoacyl-tRNA, thus increasing their reactivity as acceptors for peptidyl transferase. The chain is Elongation factor P from Rhodopseudomonas palustris (strain HaA2).